A 506-amino-acid chain; its full sequence is Glutamate--tRNA ligase (506 aa).

The short motif at 14–24 (PSPTGYLHIGG) is the 'HIGH' region element. The 'KMSKS' region motif lies at 261-265 (KLSKR). K264 serves as a coordination point for ATP.

It belongs to the class-I aminoacyl-tRNA synthetase family. Glutamate--tRNA ligase type 1 subfamily. Monomer.

It localises to the cytoplasm. It carries out the reaction tRNA(Glu) + L-glutamate + ATP = L-glutamyl-tRNA(Glu) + AMP + diphosphate. Functionally, catalyzes the attachment of glutamate to tRNA(Glu) in a two-step reaction: glutamate is first activated by ATP to form Glu-AMP and then transferred to the acceptor end of tRNA(Glu). The sequence is that of Glutamate--tRNA ligase from Roseiflexus sp. (strain RS-1).